The sequence spans 73 residues: MKAGIHPDYHMIKVVMTDGTEYETRSTWGSEGAVMNLEIDSKSHPAWTGGNQQLMDRGGRVSKFNKRFGGLGL.

Belongs to the bacterial ribosomal protein bL31 family. Type A subfamily. In terms of assembly, part of the 50S ribosomal subunit.

Binds the 23S rRNA. This is Large ribosomal subunit protein bL31 from Rhizobium etli (strain CIAT 652).